The primary structure comprises 41 residues: Histone H3.2 (41 aa).

The segment at 1-41 (MARAKQTARKSTGAEAPRKQLASKAARKSAPATGGIKKPHR) is disordered.

The protein belongs to the histone H3 family. In terms of assembly, the nucleosome is a histone octamer containing two molecules each of H2A, H2B, H3 and H4 assembled in one H3-H4 heterotetramer and two H2A-H2B heterodimers. The octamer wraps approximately 147 bp of DNA.

Its subcellular location is the nucleus. The protein resides in the chromosome. Core component of nucleosome. Nucleosomes wrap and compact DNA into chromatin, limiting DNA accessibility to the cellular machineries which require DNA as a template. Histones thereby play a central role in transcription regulation, DNA repair, DNA replication and chromosomal stability. DNA accessibility is regulated via a complex set of post-translational modifications of histones, also called histone code, and nucleosome remodeling. The sequence is that of Histone H3.2 from Tetrahymena borealis.